We begin with the raw amino-acid sequence, 399 residues long: MLLTVYCVRRDLSEVTFSLQVDADFELHNFRALCELESGIPAAESQIVYAERPLTDNHRSLASYGLKDGDVVILRQKENADPRPAVQFSNLPRIDFSSIAVPGTSNPQQRQLPRTQAQHSSPGEMASSPQGLDNPALLRDMLLANPHELSLLKERNPPLAEALLSGDLEKFSRVLVEQQQDRARREQERIRLFSADPFDLEAQAKIEEDIRQQNIEENMTIAMEEAPESFGQVAMLYINCRVNGHPVKAFVDSGAQMTIMSQACAERCNIMRLVDRRWAGIAKGVGTQKIIGRVHLAQVQIEGDFLACSFSILEEQPMDMLLGLDMLKRHQCSIDLKKNVLVIGTTGSQTTFLPEGELPECARLAYGTGREDIRPEEIADQELAEAIQKSAEDAERQKP.

The 81-residue stretch at 1–81 (MLLTVYCVRR…VILRQKENAD (81 aa)) folds into the Ubiquitin-like domain. Residues 99-134 (IAVPGTSNPQQRQLPRTQAQHSSPGEMASSPQGLDN) are disordered. Polar residues predominate over residues 103 to 131 (GTSNPQQRQLPRTQAQHSSPGEMASSPQG). Threonine 104 carries the phosphothreonine modification. 4 positions are modified to phosphoserine: serine 121, serine 128, serine 150, and serine 194. Aspartate 252 is a catalytic residue. Positions 376 to 395 (EEIADQELAEAIQKSAEDAE) match the Ubiquitin-binding motif.

This sequence belongs to the DDI1 family. In terms of assembly, homodimer.

The protein resides in the cytoplasm. It is found in the cytosol. Its subcellular location is the chromosome. In terms of biological role, aspartic protease that mediates the cleavage of NFE2L1/NRF1 at 'Leu-104', thereby promoting release of NFE2L1/NRF1 from the endoplasmic reticulum membrane. Ubiquitination of NFE2L1/NRF1 is a prerequisite for cleavage, suggesting that DDI2 specifically recognizes and binds ubiquitinated NFE2L1/NRF1. Seems to act as a proteasomal shuttle which links the proteasome and replication fork proteins like RTF2. Required, with DDI1, for cellular survival following replication stress. Together or redudantly with DDI1, removes RTF2 from stalled forks to allow cell cycle progression after replication stress and maintains genome integrity. The polypeptide is Protein DDI1 homolog 2 (Mus musculus (Mouse)).